Consider the following 122-residue polypeptide: Large ribosomal subunit protein uL14 (122 aa).

Belongs to the universal ribosomal protein uL14 family. Part of the 50S ribosomal subunit. Forms a cluster with proteins L3 and L19. In the 70S ribosome, L14 and L19 interact and together make contacts with the 16S rRNA in bridges B5 and B8.

Binds to 23S rRNA. Forms part of two intersubunit bridges in the 70S ribosome. The sequence is that of Large ribosomal subunit protein uL14 from Aliarcobacter butzleri (strain RM4018) (Arcobacter butzleri).